We begin with the raw amino-acid sequence, 299 residues long: Bifunctional protein FolD (299 aa).

NADP(+)-binding positions include 168–170 (GRS), S193, and I234.

The protein belongs to the tetrahydrofolate dehydrogenase/cyclohydrolase family. In terms of assembly, homodimer.

The catalysed reaction is (6R)-5,10-methylene-5,6,7,8-tetrahydrofolate + NADP(+) = (6R)-5,10-methenyltetrahydrofolate + NADPH. It carries out the reaction (6R)-5,10-methenyltetrahydrofolate + H2O = (6R)-10-formyltetrahydrofolate + H(+). It functions in the pathway one-carbon metabolism; tetrahydrofolate interconversion. Its function is as follows. Catalyzes the oxidation of 5,10-methylenetetrahydrofolate to 5,10-methenyltetrahydrofolate and then the hydrolysis of 5,10-methenyltetrahydrofolate to 10-formyltetrahydrofolate. The protein is Bifunctional protein FolD of Bartonella henselae (strain ATCC 49882 / DSM 28221 / CCUG 30454 / Houston 1) (Rochalimaea henselae).